A 329-amino-acid chain; its full sequence is Probable fructokinase-2 (329 aa).

Belongs to the carbohydrate kinase PfkB family.

It carries out the reaction D-fructose + ATP = D-fructose 6-phosphate + ADP + H(+). Its pathway is glycan biosynthesis; starch biosynthesis. Its function is as follows. May play an important role in maintaining the flux of carbon towards starch formation. The chain is Probable fructokinase-2 from Arabidopsis thaliana (Mouse-ear cress).